The sequence spans 386 residues: Orphan methyltransferase M.SssI (386 aa).

An SAM-dependent MTase C5-type domain is found at 11-386; it reads LRVFEAFAGI…LEAIIDKIGG (376 aa). C141 is a catalytic residue.

Belongs to the class I-like SAM-binding methyltransferase superfamily. C5-methyltransferase family.

The enzyme catalyses a 2'-deoxycytidine in DNA + S-adenosyl-L-methionine = a 5-methyl-2'-deoxycytidine in DNA + S-adenosyl-L-homocysteine + H(+). In terms of biological role, this de novo methylase acts completely and exclusively on CG residues in DNA; methylates unmethylated and hemi-methylated DNA. The sequence is that of Orphan methyltransferase M.SssI (sssIM) from Spiroplasma monobiae (strain ATCC 33825 / MQ-1).